Consider the following 125-residue polypeptide: Small ribosomal subunit protein uS12m (125 aa).

Positions 1-50 are disordered; the sequence is MPSLNQLIRHGREEKRRTDRTRALDQCPQKQGVCPRVSTRTPKKPNSAPR. A compositionally biased stretch (basic and acidic residues) spans 10–23; sequence HGREEKRRTDRTRA.

This sequence belongs to the universal ribosomal protein uS12 family.

Its subcellular location is the mitochondrion. Its function is as follows. Protein S12 is involved in the translation initiation step. In Petunia hybrida (Petunia), this protein is Small ribosomal subunit protein uS12m (RPS12).